Reading from the N-terminus, the 133-residue chain is Small ribosomal subunit protein uS8 (133 aa).

It belongs to the universal ribosomal protein uS8 family. As to quaternary structure, part of the 30S ribosomal subunit.

One of the primary rRNA binding proteins, it binds directly to 16S rRNA central domain where it helps coordinate assembly of the platform of the 30S subunit. This is Small ribosomal subunit protein uS8 from Saccharolobus solfataricus (strain ATCC 35092 / DSM 1617 / JCM 11322 / P2) (Sulfolobus solfataricus).